Reading from the N-terminus, the 643-residue chain is 3D-(3,5/4)-trihydroxycyclohexane-1,2-dione hydrolase (643 aa).

Glu65 contributes to the thiamine diphosphate binding site. Positions 441 to 521 (SLPGDLQRMW…VNVLLFDNCG (81 aa)) are thiamine pyrophosphate binding. Mg(2+) is bound by residues Asp492 and Asn519.

The protein belongs to the TPP enzyme family. Mg(2+) is required as a cofactor. Thiamine diphosphate serves as cofactor.

It carries out the reaction 3D-3,5/4-trihydroxycyclohexane-1,2-dione + H2O = 5-deoxy-D-glucuronate + H(+). Its pathway is polyol metabolism; myo-inositol degradation into acetyl-CoA; acetyl-CoA from myo-inositol: step 3/7. Its function is as follows. Involved in the cleavage of the C1-C2 bond of 3D-(3,5/4)-trihydroxycyclohexane-1,2-dione (THcHDO) to yield 5-deoxy-glucuronate (5DG). The protein is 3D-(3,5/4)-trihydroxycyclohexane-1,2-dione hydrolase of Clostridium botulinum (strain Eklund 17B / Type B).